Here is a 148-residue protein sequence, read N- to C-terminus: Large ribosomal subunit protein bL9 (148 aa).

This sequence belongs to the bacterial ribosomal protein bL9 family.

Functionally, binds to the 23S rRNA. The polypeptide is Large ribosomal subunit protein bL9 (Staphylococcus saprophyticus subsp. saprophyticus (strain ATCC 15305 / DSM 20229 / NCIMB 8711 / NCTC 7292 / S-41)).